A 468-amino-acid chain; its full sequence is MITTRFAPSPTGFLHVGGVRTALFSWLYAKNNNGKFILRIEDTDLERSTQEAVDAILDGMSWLGLKNDGEIYYQTKRFDRYKEVIQELIADGKAYYCSCSKERLEELREYQQANNLKTGYDGKCRDANYIPQQGESYVVRFKNPQDGVVSWDDAVKGRISISNHELDDMIIQRADGSPTYNFCVVVDDIDMAITHIIRGDDHVNNTPKQINIYKALNANVPVFAHVPMILGPDGAKLSKRHGAVNVMQYREDGYLPQAILNYLVRLGWSHGDQEIFSIEEMIKAFNLEHINASPSRFDFEKLKWLNKHYIKESKFDDIQTEVEYHFAKIGLDISNGPDLKELVAVMAEKVDTLVELAEKSSYFYSDDISYDENAVKKHIKASTGEIFVKLLENFEALDAQQWQDPDVLYNIVSTTAEQCQVGMGKVGMPLRVAITSSGQSPDIGITLKLLGKNKVVARLTKALEELCK.

Positions 8–18 match the 'HIGH' region motif; the sequence is PSPTGFLHVGG. Positions 97, 99, 124, and 126 each coordinate Zn(2+). Positions 236 to 240 match the 'KMSKS' region motif; it reads KLSKR. Residue lysine 239 participates in ATP binding.

This sequence belongs to the class-I aminoacyl-tRNA synthetase family. Glutamate--tRNA ligase type 1 subfamily. In terms of assembly, monomer. Requires Zn(2+) as cofactor.

Its subcellular location is the cytoplasm. The enzyme catalyses tRNA(Glu) + L-glutamate + ATP = L-glutamyl-tRNA(Glu) + AMP + diphosphate. Catalyzes the attachment of glutamate to tRNA(Glu) in a two-step reaction: glutamate is first activated by ATP to form Glu-AMP and then transferred to the acceptor end of tRNA(Glu). The chain is Glutamate--tRNA ligase from Francisella tularensis subsp. holarctica (strain FTNF002-00 / FTA).